Here is an 87-residue protein sequence, read N- to C-terminus: Large ribosomal subunit protein uL23c (87 aa).

This sequence belongs to the universal ribosomal protein uL23 family. As to quaternary structure, part of the 50S ribosomal subunit.

It is found in the plastid. The protein localises to the chloroplast. Its function is as follows. Binds to 23S rRNA. The chain is Large ribosomal subunit protein uL23c (rpl23) from Bigelowiella natans (Pedinomonas minutissima).